A 341-amino-acid chain; its full sequence is HTH-type transcriptional repressor PurR (341 aa).

Residues 2–56 (ATIKDVAKRAGVSTTTVSHVINKTRFVADETREAVWVAIKELHYSPSAVARSLKV) form the HTH lacI-type domain. The H-T-H motif DNA-binding region spans 4-23 (IKDVAKRAGVSTTTVSHVIN). The DNA-binding element occupies 48–56 (SAVARSLKV). Tyr-73, Arg-190, Thr-192, Phe-221, and Asp-275 together coordinate hypoxanthine.

As to quaternary structure, homodimer.

The protein operates within purine metabolism; purine nucleotide biosynthesis [regulation]. Its function is as follows. Is the main repressor of the genes involved in the de novo synthesis of purine nucleotides, regulating purB, purC, purEK, purF, purHD, purL, purMN and guaBA expression. PurR is allosterically activated to bind its cognate DNA by binding the purine corepressors, hypoxanthine or guanine, thereby effecting transcription repression. The protein is HTH-type transcriptional repressor PurR of Erwinia tasmaniensis (strain DSM 17950 / CFBP 7177 / CIP 109463 / NCPPB 4357 / Et1/99).